Consider the following 495-residue polypeptide: Aspartyl/glutamyl-tRNA(Asn/Gln) amidotransferase subunit B (495 aa).

Belongs to the GatB/GatE family. GatB subfamily. Heterotrimer of A, B and C subunits.

The catalysed reaction is L-glutamyl-tRNA(Gln) + L-glutamine + ATP + H2O = L-glutaminyl-tRNA(Gln) + L-glutamate + ADP + phosphate + H(+). It carries out the reaction L-aspartyl-tRNA(Asn) + L-glutamine + ATP + H2O = L-asparaginyl-tRNA(Asn) + L-glutamate + ADP + phosphate + 2 H(+). Functionally, allows the formation of correctly charged Asn-tRNA(Asn) or Gln-tRNA(Gln) through the transamidation of misacylated Asp-tRNA(Asn) or Glu-tRNA(Gln) in organisms which lack either or both of asparaginyl-tRNA or glutaminyl-tRNA synthetases. The reaction takes place in the presence of glutamine and ATP through an activated phospho-Asp-tRNA(Asn) or phospho-Glu-tRNA(Gln). This chain is Aspartyl/glutamyl-tRNA(Asn/Gln) amidotransferase subunit B, found in Methanosarcina acetivorans (strain ATCC 35395 / DSM 2834 / JCM 12185 / C2A).